A 662-amino-acid chain; its full sequence is DNA topoisomerase 4 subunit B (662 aa).

ATP-binding positions include Tyr20, Asn60, Asp87, 129 to 135 (GLHGVGI), and Lys359. The 115-residue stretch at 439–553 (TELFIVEGDS…EGHLYLAKPP (115 aa)) folds into the Toprim domain. The Mg(2+) site is built by Glu445, Asp518, and Asp520.

Belongs to the type II topoisomerase family. ParE type 1 subfamily. As to quaternary structure, heterotetramer composed of ParC and ParE. Mg(2+) serves as cofactor. Requires Mn(2+) as cofactor. The cofactor is Ca(2+).

The catalysed reaction is ATP-dependent breakage, passage and rejoining of double-stranded DNA.. Its function is as follows. Topoisomerase IV is essential for chromosome segregation. It relaxes supercoiled DNA. Performs the decatenation events required during the replication of a circular DNA molecule. The sequence is that of DNA topoisomerase 4 subunit B from Rickettsia prowazekii (strain Madrid E).